The sequence spans 88 residues: Small ribosomal subunit protein uS15 (88 aa).

Residues 1 to 23 (MIASSVKAEVVKSNARSANDTGS) are disordered. Residues 14–23 (NARSANDTGS) are compositionally biased toward polar residues.

Belongs to the universal ribosomal protein uS15 family. In terms of assembly, part of the 30S ribosomal subunit. Forms a bridge to the 50S subunit in the 70S ribosome, contacting the 23S rRNA.

In terms of biological role, one of the primary rRNA binding proteins, it binds directly to 16S rRNA where it helps nucleate assembly of the platform of the 30S subunit by binding and bridging several RNA helices of the 16S rRNA. Its function is as follows. Forms an intersubunit bridge (bridge B4) with the 23S rRNA of the 50S subunit in the ribosome. In Delftia acidovorans (strain DSM 14801 / SPH-1), this protein is Small ribosomal subunit protein uS15.